The sequence spans 450 residues: Phosphoglucosamine mutase (450 aa).

Residue serine 101 is the Phosphoserine intermediate of the active site. Mg(2+) is bound by residues serine 101, aspartate 240, aspartate 242, and aspartate 244. Position 101 is a phosphoserine (serine 101).

The protein belongs to the phosphohexose mutase family. The cofactor is Mg(2+). Activated by phosphorylation. Phosphorylated by StkP in vivo.

The enzyme catalyses alpha-D-glucosamine 1-phosphate = D-glucosamine 6-phosphate. Catalyzes the conversion of glucosamine-6-phosphate to glucosamine-1-phosphate. The sequence is that of Phosphoglucosamine mutase from Streptococcus pneumoniae (strain ATCC BAA-255 / R6).